The following is a 466-amino-acid chain: Alpha-1A adrenergic receptor (466 aa).

The Extracellular portion of the chain corresponds to 1–25 (MVFLSGNASDSSNCTQPPAPVNIPK). N-linked (GlcNAc...) asparagine glycosylation is found at Asn7 and Asn13. Residues 26–51 (AILLGVILGVLILFGVPGNILVILSV) form a helical membrane-spanning segment. The Cytoplasmic segment spans residues 52 to 63 (ACHRHLHSVTHY). The helical transmembrane segment at 64 to 89 (YIVNLAVADLLLTSTVLPFSAIFEIL) threads the bilayer. Over 90–99 (GYWAFGRVFC) the chain is Extracellular. The chain crosses the membrane as a helical span at residues 100-122 (NIWAAVDVLCCTASIMSLCIISI). The Cytoplasmic portion of the chain corresponds to 123 to 143 (DRYIGVSYPLRYPTIVTQRRG). A helical transmembrane segment spans residues 144-168 (LRALLCLWALSLVISIGPLFGWRQP). Residues 169-181 (APQDETICQINED) are Extracellular-facing. A helical transmembrane segment spans residues 182-205 (PSYVLFSALGSFYVPLAIILVMYC). Topologically, residues 206–272 (RVYVVAKRES…KFSREKKAAK (67 aa)) are cytoplasmic. A helical membrane pass occupies residues 273–297 (TLGIVVGCFVLCWLPFFLVMPIGSF). The Extracellular portion of the chain corresponds to 298–304 (FPDFKPS). Residues 305–329 (ETVFKIVFWLGYLNSCINPIIYPCS) traverse the membrane as a helical segment. Residues 330-466 (SQEFKKAFQN…ISLSENGEEV (137 aa)) lie on the Cytoplasmic side of the membrane. Positions 334–349 (KKAFQNVLKIQCLRRK) match the Nuclear localization signal motif. The S-palmitoyl cysteine moiety is linked to residue Cys345.

It belongs to the G-protein coupled receptor 1 family. Adrenergic receptor subfamily. ADRA1A sub-subfamily. As to quaternary structure, homo- and heterooligomer. Heterooligomerizes with ADRA1B homooligomers in cardiac myocytes. Interacts with CAVIN4.

It is found in the nucleus membrane. It localises to the cell membrane. The protein resides in the cytoplasm. Its subcellular location is the membrane. The protein localises to the caveola. This alpha-adrenergic receptor mediates its action by association with G proteins that activate a phosphatidylinositol-calcium second messenger system. Its effect is mediated by G(q) and G(11) proteins. Nuclear ADRA1A-ADRA1B heterooligomers regulate phenylephrine (PE)-stimulated ERK signaling in cardiac myocytes. The sequence is that of Alpha-1A adrenergic receptor (ADRA1A) from Cavia porcellus (Guinea pig).